Here is a 256-residue protein sequence, read N- to C-terminus: Triosephosphate isomerase (256 aa).

9-11 (NWK) is a binding site for substrate. The active-site Electrophile is histidine 94. The active-site Proton acceptor is glutamate 166. Substrate-binding positions include glycine 172, serine 211, and 232 to 233 (GG).

It belongs to the triosephosphate isomerase family. In terms of assembly, homodimer.

Its subcellular location is the cytoplasm. The enzyme catalyses D-glyceraldehyde 3-phosphate = dihydroxyacetone phosphate. It functions in the pathway carbohydrate biosynthesis; gluconeogenesis. Its pathway is carbohydrate degradation; glycolysis; D-glyceraldehyde 3-phosphate from glycerone phosphate: step 1/1. Functionally, involved in the gluconeogenesis. Catalyzes stereospecifically the conversion of dihydroxyacetone phosphate (DHAP) to D-glyceraldehyde-3-phosphate (G3P). The polypeptide is Triosephosphate isomerase (Natranaerobius thermophilus (strain ATCC BAA-1301 / DSM 18059 / JW/NM-WN-LF)).